Reading from the N-terminus, the 308-residue chain is Ribosomal RNA small subunit methyltransferase H (308 aa).

Residues 32-34, Asp51, Phe78, Asp99, and Gln106 each bind S-adenosyl-L-methionine; that span reads GGH.

It belongs to the methyltransferase superfamily. RsmH family.

It localises to the cytoplasm. It carries out the reaction cytidine(1402) in 16S rRNA + S-adenosyl-L-methionine = N(4)-methylcytidine(1402) in 16S rRNA + S-adenosyl-L-homocysteine + H(+). Functionally, specifically methylates the N4 position of cytidine in position 1402 (C1402) of 16S rRNA. This Campylobacter curvus (strain 525.92) protein is Ribosomal RNA small subunit methyltransferase H.